The sequence spans 100 residues: C-X-C motif chemokine 3 (100 aa).

The first 31 residues, 1-31 (MAPPTCRLLSAALVLLLLLATNHQATGAVVA), serve as a signal peptide directing secretion. Cystine bridges form between Cys36/Cys62 and Cys38/Cys78.

The protein belongs to the intercrine alpha (chemokine CxC) family.

The protein resides in the secreted. Ligand for CXCR2. Has chemotactic activity for neutrophils. May play a role in inflammation and exert its effects on endothelial cells in an autocrine fashion. The protein is C-X-C motif chemokine 3 of Mus musculus (Mouse).